A 286-amino-acid chain; its full sequence is MQNKIDYKNIKKIGLVTRPNVSLDKEILKLQSILSIYKVELVLFKESSEILDLPKYGLDDLFKISDFVISLGGDGTLISLCRKACEYDKAVLGIHAGHLGFLTDFKVDEAENFFQAFFQGEFRIEKPYLLSVFLEDKQGKILEKLAFNDVVISKNNQASMAHIEVFRKEKKFNEYFGDGLIVATPAGSTAYNLSANGPIVYTLAQAFILTPVCSHSLTQRPIVLPKGFEIEIMAKDCILCIDGQENYKMNDFKSIKVGLSDKNVALIHPKNRDYFQILKEKLHWGN.

The active-site Proton acceptor is the aspartate 74. Residues 74–75, 148–149, aspartate 178, alanine 186, 189–194, and glutamine 244 contribute to the NAD(+) site; these read DG, ND, and TAYNLS.

It belongs to the NAD kinase family. A divalent metal cation is required as a cofactor.

The protein localises to the cytoplasm. It carries out the reaction NAD(+) + ATP = ADP + NADP(+) + H(+). Its function is as follows. Involved in the regulation of the intracellular balance of NAD and NADP, and is a key enzyme in the biosynthesis of NADP. Catalyzes specifically the phosphorylation on 2'-hydroxyl of the adenosine moiety of NAD to yield NADP. The polypeptide is NAD kinase (Campylobacter jejuni subsp. jejuni serotype O:6 (strain 81116 / NCTC 11828)).